Here is a 389-residue protein sequence, read N- to C-terminus: GTPase Obg (389 aa).

Positions 1-159 constitute an Obg domain; sequence MKFVDEAVIR…RSLKLELLLL (159 aa). Residues 160 to 333 form the OBG-type G domain; that stretch reads ADVGLLGMPN…LALKLLDYIA (174 aa). GTP contacts are provided by residues 166–173, 191–195, 213–216, 283–286, and 314–316; these read GMPNAGKS, FTTLV, DIPG, NKTD, and SAY. Mg(2+)-binding residues include serine 173 and threonine 193.

The protein belongs to the TRAFAC class OBG-HflX-like GTPase superfamily. OBG GTPase family. Monomer. The cofactor is Mg(2+).

It is found in the cytoplasm. In terms of biological role, an essential GTPase which binds GTP, GDP and possibly (p)ppGpp with moderate affinity, with high nucleotide exchange rates and a fairly low GTP hydrolysis rate. Plays a role in control of the cell cycle, stress response, ribosome biogenesis and in those bacteria that undergo differentiation, in morphogenesis control. The chain is GTPase Obg from Shewanella baltica (strain OS223).